The sequence spans 448 residues: Chromosomal replication initiator protein DnaA (448 aa).

A domain I, interacts with DnaA modulators region spans residues 1-93 (MEQIVSSLWS…KPTEQNLSAS (93 aa)). Residues 94–110 (STNKEELTQDTVHKFKT) form a domain II region. Positions 111–328 (GLNGRLTFDN…GAINRVSAWC (218 aa)) are domain III, AAA+ region. Positions 156, 158, 159, and 160 each coordinate ATP. A domain IV, binds dsDNA region spans residues 329-448 (NFTKRQITID…YTNLTRKLSS (120 aa)).

Belongs to the DnaA family. Oligomerizes as a right-handed, spiral filament on DNA at oriC.

The protein resides in the cytoplasm. Its function is as follows. Plays an essential role in the initiation and regulation of chromosomal replication. ATP-DnaA binds to the origin of replication (oriC) to initiate formation of the DNA replication initiation complex once per cell cycle. Binds the DnaA box (a 9 base pair repeat at the origin) and separates the double-stranded (ds)DNA. Forms a right-handed helical filament on oriC DNA; dsDNA binds to the exterior of the filament while single-stranded (ss)DNA is stabiized in the filament's interior. The ATP-DnaA-oriC complex binds and stabilizes one strand of the AT-rich DNA unwinding element (DUE), permitting loading of DNA polymerase. After initiation quickly degrades to an ADP-DnaA complex that is not apt for DNA replication. Binds acidic phospholipids. This chain is Chromosomal replication initiator protein DnaA, found in Haemophilus ducreyi (strain 35000HP / ATCC 700724).